Consider the following 427-residue polypeptide: Amino acid transporter AVT3A (427 aa).

Residues M1 to R35 are disordered. At M1 to K42 the chain is on the cytoplasmic side. Low complexity predominate over residues G8–P24. The chain crosses the membrane as a helical span at residues T43 to F63. Over K64–L69 the chain is Vacuolar. Residues L70 to V90 traverse the membrane as a helical segment. The Cytoplasmic segment spans residues H91 to L122. Residues V123–V143 traverse the membrane as a helical segment. Topologically, residues A144–H157 are vacuolar. Residues I158 to L178 form a helical membrane-spanning segment. The Cytoplasmic segment spans residues N179–H186. Residues L187–V207 traverse the membrane as a helical segment. Residues Q208 to S227 are Vacuolar-facing. A helical transmembrane segment spans residues V228–P248. Over L249 to A262 the chain is Cytoplasmic. The helical transmembrane segment at L263 to M283 threads the bilayer. Over A284 to G300 the chain is Vacuolar. Residues V301 to M321 traverse the membrane as a helical segment. Topologically, residues M322–S339 are cytoplasmic. Residues V340–F360 form a helical membrane-spanning segment. The Vacuolar portion of the chain corresponds to A361–D362. A helical transmembrane segment spans residues F363–F383. Residues H384 to R396 are Cytoplasmic-facing. Residues I397–T417 traverse the membrane as a helical segment. Topologically, residues A418 to A427 are vacuolar.

Belongs to the amino acid/polyamine transporter 2 family. Amino acid/auxin permease (AAAP) (TC 2.A.18.8) subfamily. In terms of tissue distribution, ubiquitous.

Its subcellular location is the vacuole membrane. Translocates preferentially neutral amino acids and to a lesser extent aromatic amino acids from the vacuole to the cytoplasm. Requires ATP for function. The sequence is that of Amino acid transporter AVT3A from Arabidopsis thaliana (Mouse-ear cress).